The sequence spans 500 residues: Probable cytosol aminopeptidase (500 aa).

Residues Lys265 and Asp270 each coordinate Mn(2+). The active site involves Lys277. Mn(2+) contacts are provided by Asp288, Asp347, and Glu349. Residue Arg351 is part of the active site.

This sequence belongs to the peptidase M17 family. Requires Mn(2+) as cofactor.

Its subcellular location is the cytoplasm. The enzyme catalyses Release of an N-terminal amino acid, Xaa-|-Yaa-, in which Xaa is preferably Leu, but may be other amino acids including Pro although not Arg or Lys, and Yaa may be Pro. Amino acid amides and methyl esters are also readily hydrolyzed, but rates on arylamides are exceedingly low.. The catalysed reaction is Release of an N-terminal amino acid, preferentially leucine, but not glutamic or aspartic acids.. Its function is as follows. Presumably involved in the processing and regular turnover of intracellular proteins. Catalyzes the removal of unsubstituted N-terminal amino acids from various peptides. This is Probable cytosol aminopeptidase from Rickettsia massiliae (strain Mtu5).